The chain runs to 61 residues: Small ribosomal subunit protein uS14B (61 aa).

Cys-24, Cys-27, Cys-40, and Cys-43 together coordinate Zn(2+).

This sequence belongs to the universal ribosomal protein uS14 family. Zinc-binding uS14 subfamily. Part of the 30S ribosomal subunit. Contacts proteins S3 and S10. Zn(2+) is required as a cofactor.

Functionally, binds 16S rRNA, required for the assembly of 30S particles and may also be responsible for determining the conformation of the 16S rRNA at the A site. This Mycobacterium ulcerans (strain Agy99) protein is Small ribosomal subunit protein uS14B.